The primary structure comprises 325 residues: Aspartate carbamoyltransferase catalytic subunit (325 aa).

Carbamoyl phosphate is bound by residues arginine 55 and threonine 56. Lysine 83 lines the L-aspartate pocket. 3 residues coordinate carbamoyl phosphate: arginine 105, histidine 135, and glutamine 138. Positions 176 and 230 each coordinate L-aspartate. Positions 271 and 272 each coordinate carbamoyl phosphate.

The protein belongs to the aspartate/ornithine carbamoyltransferase superfamily. ATCase family. As to quaternary structure, heterododecamer (2C3:3R2) of six catalytic PyrB chains organized as two trimers (C3), and six regulatory PyrI chains organized as three dimers (R2).

It carries out the reaction carbamoyl phosphate + L-aspartate = N-carbamoyl-L-aspartate + phosphate + H(+). Its pathway is pyrimidine metabolism; UMP biosynthesis via de novo pathway; (S)-dihydroorotate from bicarbonate: step 2/3. In terms of biological role, catalyzes the condensation of carbamoyl phosphate and aspartate to form carbamoyl aspartate and inorganic phosphate, the committed step in the de novo pyrimidine nucleotide biosynthesis pathway. The chain is Aspartate carbamoyltransferase catalytic subunit from Streptomyces avermitilis (strain ATCC 31267 / DSM 46492 / JCM 5070 / NBRC 14893 / NCIMB 12804 / NRRL 8165 / MA-4680).